A 197-amino-acid polypeptide reads, in one-letter code: Nucleoside triphosphate pyrophosphatase (197 aa).

Asp71 (proton acceptor) is an active-site residue.

It belongs to the Maf family. A divalent metal cation is required as a cofactor.

Its subcellular location is the cytoplasm. It carries out the reaction a ribonucleoside 5'-triphosphate + H2O = a ribonucleoside 5'-phosphate + diphosphate + H(+). The enzyme catalyses a 2'-deoxyribonucleoside 5'-triphosphate + H2O = a 2'-deoxyribonucleoside 5'-phosphate + diphosphate + H(+). Its function is as follows. Nucleoside triphosphate pyrophosphatase. May have a dual role in cell division arrest and in preventing the incorporation of modified nucleotides into cellular nucleic acids. The polypeptide is Nucleoside triphosphate pyrophosphatase (Synechococcus sp. (strain JA-3-3Ab) (Cyanobacteria bacterium Yellowstone A-Prime)).